The sequence spans 670 residues: Solute carrier organic anion transporter family member 1A3 (670 aa).

Residues 1–20 (MGDLEKGAATHGAGCFAKIK) are Cytoplasmic-facing. A helical transmembrane segment spans residues 21-40 (VFLMALTCAYVSKSLSGTFM). Topologically, residues 41–59 (SSMLTQIERQFGIPTAIVG) are extracellular. The helical transmembrane segment at 60-80 (FINGSFEIGNLLLIIFVSYFG) threads the bilayer. Residues 81–86 (MKLHRP) lie on the Cytoplasmic side of the membrane. Residues 87 to 111 (IVIGVGCAVMGLGCFIISLPHFLMG) traverse the membrane as a helical segment. The Extracellular portion of the chain corresponds to 112–155 (RYEYETTILPTSNLSSNSFLCMENQTQTLNPAQDPAECVKEVKS). N-linked (GlcNAc...) asparagine glycosylation is found at N124 and N135. A helical transmembrane segment spans residues 156–184 (LMWIYVLVGNIIRGIGETPIMPLGVSYIE). Residues 185–203 (NFAKSENSPLYIGILETGK) lie on the Cytoplasmic side of the membrane. Residues 204-224 (MIGPIFGLLLGSFCASIYVDT) traverse the membrane as a helical segment. At 225–242 (GSVNTDDLTITPTDIRWV) the chain is on the extracellular side. Residues 243 to 267 (GAWWIGFLVCAGVNILISIPFFFFP) traverse the membrane as a helical segment. Topologically, residues 268-311 (KTLPKEGLQENVDGTENAKEESTEKRPRKKNRGITKDFFPFLKS) are cytoplasmic. Residues 277 to 296 (ENVDGTENAKEESTEKRPRK) are disordered. Basic and acidic residues predominate over residues 283–292 (ENAKEESTEK). A helical membrane pass occupies residues 312–333 (PVLQPDLHAVHPYKVLQVNAFN). The Extracellular segment spans residues 334 to 353 (IYFSFLPKYLENQYGKSTAE). Residues 354-377 (VIFLMGVYNLPAICIGYLIAGFMM) form a helical membrane-spanning segment. The Cytoplasmic segment spans residues 378–381 (KKFK). The chain crosses the membrane as a helical span at residues 382-405 (ITVKTAAFLAFCLSLSEYSFGFCN). Residues 406–513 (FLITCDNVPV…PECTNKLQYL (108 aa)) lie on the Extracellular side of the membrane. Residues 433–488 (NNVLADCNTRCSCLTKTWDPVCGDNGLAYMSACLAGCEKSVGTGTNMVFHNCSCIQ) enclose the Kazal-like domain. Disulfide bonds link C439/C469, C445/C465, and C454/C486. 2 N-linked (GlcNAc...) asparagine glycosylation sites follow: N483 and N492. The chain crosses the membrane as a helical span at residues 514 to 536 (LILSGFLSILYSFAAIPGYMVFL). Topologically, residues 537–545 (RCIKSEEKS) are cytoplasmic. A helical membrane pass occupies residues 546–571 (LGIGIHAFCIRVFAGIPAPIYFGALI). Residues 572–605 (DRTCLHWGTQKCGAPGACRMYDINSFRRIYLGMS) are Extracellular-facing. Residues 606 to 623 (AALRGSSYLPAFVIVILT) form a helical membrane-spanning segment. The Cytoplasmic portion of the chain corresponds to 624–670 (RKFSLPGKINSSEMEIAEMKLTEKESQCTDVHRNPKFKNDGELKTKL).

It belongs to the organo anion transporter (TC 2.A.60) family. All isoforms are detected in kidney, and many are kidney specific. Isoforms 2 and 13 are also detected in liver. Isoforms 4 and 9/K4 are ubiquitous, but isoform 9/K13 is kidney specific. Isoforms 5 and 14 are detected in all tissues tested, with the exception of pancreas and spleen. Isoforms 11 and 15 are detected in kidney, pancreas and testis. Isoform 7 is detected in kidney, liver, testis and spleen.

The protein localises to the cell membrane. In terms of biological role, mediates the Na(+)-independent transport of organic anions such as methotrexate, taurocholate, folate and prostaglandin E2. May contribute to renal secretion and/or reabsorption of hydrophobic anionic compounds. Mediates renal clearance of methotrexate from the blood. The chain is Solute carrier organic anion transporter family member 1A3 (Slco1a3) from Rattus norvegicus (Rat).